We begin with the raw amino-acid sequence, 75 residues long: Gas vesicle protein S (75 aa).

It belongs to the gas vesicle GvpA family.

It is found in the gas vesicle. Functionally, probably a minor component of the gas vesicle. Gas vesicles are hollow, gas filled proteinaceous nanostructures found in some microorganisms. It is not clear what function gas vesicles perform in soil bacteria. This is Gas vesicle protein S from Streptomyces sp. (strain CB03234).